The primary structure comprises 56 residues: Large ribosomal subunit protein bL32 (56 aa).

The span at 1 to 16 (MAVQKSKKSRAARGMR) shows a compositional bias: basic residues. The tract at residues 1 to 22 (MAVQKSKKSRAARGMRRSHDAL) is disordered.

The protein belongs to the bacterial ribosomal protein bL32 family.

This chain is Large ribosomal subunit protein bL32, found in Photobacterium profundum (strain SS9).